Consider the following 448-residue polypeptide: U-box domain-containing protein 30 (448 aa).

In terms of domain architecture, U-box spans 63–137; it reads DIPSVFICPI…YTWFSQKYVL (75 aa). ARM repeat units follow at residues 179 to 219 and 221 to 260; these read LMAR…SLDL and SDSK…GLVE.

It carries out the reaction S-ubiquitinyl-[E2 ubiquitin-conjugating enzyme]-L-cysteine + [acceptor protein]-L-lysine = [E2 ubiquitin-conjugating enzyme]-L-cysteine + N(6)-ubiquitinyl-[acceptor protein]-L-lysine.. It functions in the pathway protein modification; protein ubiquitination. Functions as an E3 ubiquitin ligase. This Arabidopsis thaliana (Mouse-ear cress) protein is U-box domain-containing protein 30 (PUB30).